A 524-amino-acid chain; its full sequence is Alkaline phosphatase, tissue-nonspecific isozyme (524 aa).

The first 17 residues, 1–17 (MISPFLVLAIGTCLTNS), serve as a signal peptide directing secretion. Residue Asp-60 participates in Mg(2+) binding. 2 residues coordinate Zn(2+): Asp-60 and Ser-110. Residue Ser-110 is the Phosphoserine intermediate of the active site. Phosphoserine is present on Ser-110. Cys-139 and Cys-201 form a disulfide bridge. Asn-140 is a glycosylation site (N-linked (GlcNAc...) asparagine). Thr-173 lines the Mg(2+) pocket. N-linked (GlcNAc...) asparagine glycosylation is present at Asn-230. Ca(2+) is bound at residue Glu-235. Asn-271 carries an N-linked (GlcNAc...) asparagine glycan. Ca(2+)-binding residues include Phe-290 and Glu-291. Residue Asn-303 is glycosylated (N-linked (GlcNAc...) asparagine). Residue Asp-306 participates in Ca(2+) binding. Position 332 (Glu-332) interacts with Mg(2+). Positions 337, 341, 378, and 379 each coordinate Zn(2+). Residue Asn-430 is glycosylated (N-linked (GlcNAc...) asparagine). Zn(2+) is bound at residue His-454. Cys-489 and Cys-497 are oxidised to a cystine. Residue Ser-501 is the site of GPI-anchor amidated serine attachment. Positions 502-524 (SAGSLAAGPLLLALALYPLSVLF) are cleaved as a propeptide — removed in mature form.

The protein belongs to the alkaline phosphatase family. As to quaternary structure, homodimer. Requires Mg(2+) as cofactor. The cofactor is Zn(2+). Ca(2+) serves as cofactor. In terms of processing, N-glycosylated.

The protein localises to the cell membrane. It localises to the extracellular vesicle membrane. The protein resides in the mitochondrion membrane. It is found in the mitochondrion intermembrane space. The enzyme catalyses a phosphate monoester + H2O = an alcohol + phosphate. It catalyses the reaction diphosphate + H2O = 2 phosphate + H(+). It carries out the reaction pyridoxal 5'-phosphate + H2O = pyridoxal + phosphate. The catalysed reaction is phosphoethanolamine + H2O = ethanolamine + phosphate. The enzyme catalyses N-phosphocreatine + H2O = creatine + phosphate. It catalyses the reaction ATP + H2O = ADP + phosphate + H(+). It carries out the reaction ADP + H2O = AMP + phosphate + H(+). The catalysed reaction is AMP + H2O = adenosine + phosphate. Its activity is regulated as follows. Phosphatase activity is specifically inhibited by 5-((5-chloro-2-methoxyphenyl)sulfonamido)nicotinamide (SBI-425). Functionally, alkaline phosphatase that metabolizes various phosphate compounds and plays a key role in skeletal mineralization and adaptive thermogenesis. Has broad substrate specificity and can hydrolyze a considerable variety of compounds: however, only a few substrates, such as diphosphate (inorganic pyrophosphate; PPi), pyridoxal 5'-phosphate (PLP) and N-phosphocreatine are natural substrates. Plays an essential role in skeletal and dental mineralization via its ability to hydrolyze extracellular diphosphate, a potent mineralization inhibitor, to phosphate: it thereby promotes hydroxyapatite crystal formation and increases inorganic phosphate concentration. Acts in a non-redundant manner with PHOSPHO1 in skeletal mineralization: while PHOSPHO1 mediates the initiation of hydroxyapatite crystallization in the matrix vesicles (MVs), ALPL/TNAP catalyzes the spread of hydroxyapatite crystallization in the extracellular matrix. Also promotes dephosphorylation of osteopontin (SSP1), an inhibitor of hydroxyapatite crystallization in its phosphorylated state; it is however unclear whether ALPL/TNAP mediates SSP1 dephosphorylation via a direct or indirect manner. Catalyzes dephosphorylation of PLP to pyridoxal (PL), the transportable form of vitamin B6, in order to provide a sufficient amount of PLP in the brain, an essential cofactor for enzymes catalyzing the synthesis of diverse neurotransmitters. Additionally, also able to mediate ATP degradation in a stepwise manner to adenosine, thereby regulating the availability of ligands for purinergic receptors. Also capable of dephosphorylating microbial products, such as lipopolysaccharides (LPS) as well as other phosphorylated small-molecules, such as poly-inosine:cytosine (poly I:C). Acts as a key regulator of adaptive thermogenesis as part of the futile creatine cycle: localizes to the mitochondria of thermogenic fat cells and acts by mediating hydrolysis of N-phosphocreatine to initiate a futile cycle of creatine dephosphorylation and phosphorylation. During the futile creatine cycle, creatine and N-phosphocreatine are in a futile cycle, which dissipates the high energy charge of N-phosphocreatine as heat without performing any mechanical or chemical work. This Homo sapiens (Human) protein is Alkaline phosphatase, tissue-nonspecific isozyme.